The chain runs to 644 residues: Biosynthetic arginine decarboxylase (644 aa).

Lys-113 carries the post-translational modification N6-(pyridoxal phosphate)lysine. 293-303 (FDVGGGLGVDY) contributes to the substrate binding site.

The protein belongs to the Orn/Lys/Arg decarboxylase class-II family. SpeA subfamily. It depends on Mg(2+) as a cofactor. Pyridoxal 5'-phosphate serves as cofactor.

The catalysed reaction is L-arginine + H(+) = agmatine + CO2. In terms of biological role, catalyzes the biosynthesis of agmatine from arginine. The chain is Biosynthetic arginine decarboxylase from Pasteurella multocida (strain Pm70).